The following is a 334-amino-acid chain: Retinol dehydrogenase 13 (334 aa).

S2 carries the post-translational modification N-acetylserine. 45-51 (GANTGIG) contributes to the NADP(+) binding site. A substrate-binding site is contributed by S174. Y200 functions as the Proton acceptor in the catalytic mechanism.

This sequence belongs to the short-chain dehydrogenases/reductases (SDR) family.

It is found in the mitochondrion inner membrane. It catalyses the reaction all-trans-retinol + NADP(+) = all-trans-retinal + NADPH + H(+). It participates in cofactor metabolism; retinol metabolism. Its function is as follows. Retinol dehydrogenase with a clear preference for NADP. Oxidizes all-trans-retinol, but seems to reduce all-trans-retinal with much higher efficiency. Has no activity towards steroid. The chain is Retinol dehydrogenase 13 (Rdh13) from Mus musculus (Mouse).